The following is a 378-amino-acid chain: Anhydro-N-acetylmuramic acid kinase (378 aa).

An ATP-binding site is contributed by 23 to 30 (GTSMDGAD).

It belongs to the anhydro-N-acetylmuramic acid kinase family.

The enzyme catalyses 1,6-anhydro-N-acetyl-beta-muramate + ATP + H2O = N-acetyl-D-muramate 6-phosphate + ADP + H(+). Its pathway is amino-sugar metabolism; 1,6-anhydro-N-acetylmuramate degradation. The protein operates within cell wall biogenesis; peptidoglycan recycling. In terms of biological role, catalyzes the specific phosphorylation of 1,6-anhydro-N-acetylmuramic acid (anhMurNAc) with the simultaneous cleavage of the 1,6-anhydro ring, generating MurNAc-6-P. Is required for the utilization of anhMurNAc either imported from the medium or derived from its own cell wall murein, and thus plays a role in cell wall recycling. This Bordetella bronchiseptica (strain ATCC BAA-588 / NCTC 13252 / RB50) (Alcaligenes bronchisepticus) protein is Anhydro-N-acetylmuramic acid kinase.